A 283-amino-acid chain; its full sequence is Probable endonuclease 4 (283 aa).

Zn(2+)-binding residues include His-69, His-113, Glu-148, Asp-182, His-185, His-217, Asp-230, His-232, and Glu-262.

It belongs to the AP endonuclease 2 family. It depends on Zn(2+) as a cofactor.

It carries out the reaction Endonucleolytic cleavage to 5'-phosphooligonucleotide end-products.. Functionally, endonuclease IV plays a role in DNA repair. It cleaves phosphodiester bonds at apurinic or apyrimidinic (AP) sites, generating a 3'-hydroxyl group and a 5'-terminal sugar phosphate. The polypeptide is Probable endonuclease 4 (Bifidobacterium longum (strain DJO10A)).